The following is a 127-amino-acid chain: Large ribosomal subunit protein uL22 (127 aa).

Part of the 50S ribosomal subunit.

This protein binds specifically to 23S rRNA; its binding is stimulated by other ribosomal proteins, e.g. L4, L17, and L20. It is important during the early stages of 50S assembly. It makes multiple contacts with different domains of the 23S rRNA in the assembled 50S subunit and ribosome. Functionally, the globular domain of the protein is located near the polypeptide exit tunnel on the outside of the subunit, while an extended beta-hairpin is found that lines the wall of the exit tunnel in the center of the 70S ribosome. In Rhodopseudomonas palustris (strain ATCC BAA-98 / CGA009), this protein is Large ribosomal subunit protein uL22.